Reading from the N-terminus, the 261-residue chain is MNYIQAIILAIIEGITEFLPVSSTGHMIIASSFFGIAHEDFTKLFTIVIQLGAILSVVVLYFKRFFQTLDFYFKLLVAFIPAVVLGLLFSKKIDALLESPVTVAVSLLVGGIILLKVDDWFNNSSETEITYLKAFKIGLFQCIAMIPGVSRSGASIVGGMSQKLARTSAAEFSFFLAVPTMLGATLKKCYDYYKDGFILTHDQINILIIGNIVAFLVALLAIKTFIGFLSKNGFKVFGYYRIVAGIVLLLIHFFIHPLTLI.

8 helical membrane-spanning segments follow: residues 1-21 (MNYI…FLPV), 41-61 (FTKL…VVLY), 69-89 (LDFY…GLLF), 95-115 (ALLE…IILL), 129-149 (ITYL…IPGV), 169-186 (AAEF…GATL), 206-226 (ILII…KTFI), and 241-261 (RIVA…LTLI).

This sequence belongs to the UppP family.

It is found in the cell inner membrane. The catalysed reaction is di-trans,octa-cis-undecaprenyl diphosphate + H2O = di-trans,octa-cis-undecaprenyl phosphate + phosphate + H(+). Catalyzes the dephosphorylation of undecaprenyl diphosphate (UPP). Confers resistance to bacitracin. This Flavobacterium psychrophilum (strain ATCC 49511 / DSM 21280 / CIP 103535 / JIP02/86) protein is Undecaprenyl-diphosphatase.